Consider the following 221-residue polypeptide: MHLVGVLDIAKDILKANKRLADKNRKLLNKHGVVAFDFMGAIGSGKTLLIEKLIDNLKDKYKIACIAGDVIAKFDAERMEKHGAKVVPLNTGKECHLDAHLVGHALEDLNLDEIDLLFIENVGNLICPADFDLGTHKRIVVISTTEGDDTIEKHPGIMKTADLIVINKIDLADAVGADIKKMENDAKRINPDAEVVLLSLKTMEGFDKVLEFIEKSVKEVK.

Residues 35–196 (AFDFMGAIGS…KRINPDAEVV (162 aa)) form a G-domain region. C95 and H96 together coordinate Ni(2+). The Zn(2+) site is built by C95, H96, H100, H104, and C127. C127 contacts Ni(2+).

It belongs to the SIMIBI class G3E GTPase family. HypB/HupM subfamily. In terms of assembly, homodimer.

Functionally, involved in the maturation of [NiFe] hydrogenases. Required for nickel insertion into the metal center of the hydrogenase. Exhibits a low intrinsic GTPase activity, which is essential for nickel insertion. The sequence is that of Probable hydrogenase maturation factor HypB from Methanocaldococcus jannaschii (strain ATCC 43067 / DSM 2661 / JAL-1 / JCM 10045 / NBRC 100440) (Methanococcus jannaschii).